Reading from the N-terminus, the 400-residue chain is Plasminogen activator inhibitor 1 (400 aa).

Residues 1–21 (MQMSTVCLALGLALVFGEASA) form the signal peptide. Residues Asn-230, Asn-286, and Asn-350 are each glycosylated (N-linked (GlcNAc...) asparagine).

The protein belongs to the serpin family. As to quaternary structure, forms a heterodimer with TMPRSS7. Interacts with VTN. Binds LRP1B; binding is followed by internalization and degradation. Interacts with PPP1CB. In complex with PLAU/uPA, interacts with PLAUR/uPAR. Interacts with SORL1 and LRP1, either alone or in complex with PLAU; these interactions are abolished in the presence of LRPAP1/RAP. The ternary complex composed of PLAUR-PLAU-PAI1 also interacts with SORL1. Interacts with PLAT/tPA. Also interacts with SORL1, when complexed to PLAT/tPA.

The protein resides in the secreted. Functionally, serine protease inhibitor. Inhibits TMPRSS7. Is a primary inhibitor of tissue-type plasminogen activator (PLAT) and urokinase-type plasminogen activator (PLAU). As PLAT inhibitor, it is required for fibrinolysis down-regulation and is responsible for the controlled degradation of blood clots. As PLAU inhibitor, it is involved in the regulation of cell adhesion and spreading. Acts as a regulator of cell migration, independently of its role as protease inhibitor. It is required for stimulation of keratinocyte migration during cutaneous injury repair. It is involved in cellular and replicative senescence. Plays a role in alveolar type 2 cells senescence in the lung. Is involved in the regulation of cementogenic differentiation of periodontal ligament stem cells, and regulates odontoblast differentiation and dentin formation during odontogenesis. This chain is Plasminogen activator inhibitor 1 (SERPINE1), found in Neovison vison (American mink).